The primary structure comprises 481 residues: Aspartyl/glutamyl-tRNA(Asn/Gln) amidotransferase subunit B (481 aa).

It belongs to the GatB/GatE family. GatB subfamily. In terms of assembly, heterotrimer of A, B and C subunits.

The catalysed reaction is L-glutamyl-tRNA(Gln) + L-glutamine + ATP + H2O = L-glutaminyl-tRNA(Gln) + L-glutamate + ADP + phosphate + H(+). The enzyme catalyses L-aspartyl-tRNA(Asn) + L-glutamine + ATP + H2O = L-asparaginyl-tRNA(Asn) + L-glutamate + ADP + phosphate + 2 H(+). Its function is as follows. Allows the formation of correctly charged Asn-tRNA(Asn) or Gln-tRNA(Gln) through the transamidation of misacylated Asp-tRNA(Asn) or Glu-tRNA(Gln) in organisms which lack either or both of asparaginyl-tRNA or glutaminyl-tRNA synthetases. The reaction takes place in the presence of glutamine and ATP through an activated phospho-Asp-tRNA(Asn) or phospho-Glu-tRNA(Gln). The sequence is that of Aspartyl/glutamyl-tRNA(Asn/Gln) amidotransferase subunit B from Ectopseudomonas mendocina (strain ymp) (Pseudomonas mendocina).